A 347-amino-acid polypeptide reads, in one-letter code: MTICTDIIANGYDLKTLIYNSGVVSIKVIALIICLLLATAYLTFAERKVIAYMQLRVGPSLAGPFGLLQPIADAVKLVFKEPIIPAKADRKLFIIAPIITFVLSLLGWSVIPIDHDIVLSRIHIGGILFILAVTSLGVYGIIIAGWASNSKYAFLGAVRSAAQMISYELAMALSIVAVLIVTGEMDLIQIVEAQKTRPIWLTIMMLPLAVIYFISILAKTNRLPFDLPEAESELVAGYNVEYSSMAFAMFFLGEYANMILGSSLMTIMFLGGYLPPFNLEILTFIPGYIWFILKVSMVLFCFLWIRATLPRYRYDQLMYLGLKVFLPIVLAWIIVVSAILVYSNNLP.

The next 9 membrane-spanning stretches (helical) occupy residues 22–42 (GVVS…TAYL), 59–79 (PSLA…KLVF), 93–113 (FIIA…VIPI), 124–144 (IGGI…IIIA), 171–191 (MALS…IQIV), 198–218 (PIWL…SILA), 240–260 (VEYS…NMIL), 285–305 (IPGY…FLWI), and 321–341 (GLKV…AILV).

Belongs to the complex I subunit 1 family. As to quaternary structure, NDH-1 is composed of 14 different subunits. Subunits NuoA, H, J, K, L, M, N constitute the membrane sector of the complex.

Its subcellular location is the cell inner membrane. The catalysed reaction is a quinone + NADH + 5 H(+)(in) = a quinol + NAD(+) + 4 H(+)(out). In terms of biological role, NDH-1 shuttles electrons from NADH, via FMN and iron-sulfur (Fe-S) centers, to quinones in the respiratory chain. The immediate electron acceptor for the enzyme in this species is believed to be ubiquinone. Couples the redox reaction to proton translocation (for every two electrons transferred, four hydrogen ions are translocated across the cytoplasmic membrane), and thus conserves the redox energy in a proton gradient. This subunit may bind ubiquinone. This chain is NADH-quinone oxidoreductase subunit H, found in Orientia tsutsugamushi (strain Ikeda) (Rickettsia tsutsugamushi).